Consider the following 282-residue polypeptide: B3 domain-containing protein At5g06250 (282 aa).

Positions 46 to 159 form a DNA-binding region, TF-B3; that stretch reads FEKSLTPSDV…RLFIGWRRRG (114 aa).

The protein localises to the nucleus. In Arabidopsis thaliana (Mouse-ear cress), this protein is B3 domain-containing protein At5g06250.